The sequence spans 428 residues: MNAPLKADDTDLAALMADLATKARAAARVLALAPAEQKNTGLAAMAAALRASAPKLLAANAEDVAEARASGATPAFVDRLALNDARIETMAAGLDVVRGLDDPVGKVTERWTRPNGMTIERVRVPLGVAAVIFESRPNVLADAGALCLKSGNAVILRGGSDSFRSCQAIHACLTQGLREAGLPEAAISLVPTRDRAAVGLLLSGLDGRIDVIVPRGGKSLVARVEAEARVPVFAHLDGNNHVFVDKAASLDMAKTIVLNAKMRRPGICGAAETLLVDKAAAPAQLKPLVGMLIDAGCEVRGDTDVQKADARVTPVTEDDWATEFEAPIIAAKVVGGLDEAIAHIERYGSHHTDAIVTDDATAATRFLNEVDSAIVLHNASTQFADGGEFGFGAEIGIATGKFHARGPVGVEQLTSFKYRVHGTGQTRP.

This sequence belongs to the gamma-glutamyl phosphate reductase family.

The protein localises to the cytoplasm. The enzyme catalyses L-glutamate 5-semialdehyde + phosphate + NADP(+) = L-glutamyl 5-phosphate + NADPH + H(+). It participates in amino-acid biosynthesis; L-proline biosynthesis; L-glutamate 5-semialdehyde from L-glutamate: step 2/2. Catalyzes the NADPH-dependent reduction of L-glutamate 5-phosphate into L-glutamate 5-semialdehyde and phosphate. The product spontaneously undergoes cyclization to form 1-pyrroline-5-carboxylate. The chain is Gamma-glutamyl phosphate reductase from Afipia carboxidovorans (strain ATCC 49405 / DSM 1227 / KCTC 32145 / OM5) (Oligotropha carboxidovorans).